A 429-amino-acid polypeptide reads, in one-letter code: Adenylosuccinate synthetase (429 aa).

Residues 12 to 18 and 40 to 42 contribute to the GTP site; these read GDEGKGK and GHT. Aspartate 13 (proton acceptor) is an active-site residue. Residues aspartate 13 and glycine 40 each coordinate Mg(2+). IMP contacts are provided by residues 13 to 16, 38 to 41, threonine 129, arginine 143, glutamine 223, threonine 238, and arginine 302; these read DEGK and NAGH. Histidine 41 functions as the Proton donor in the catalytic mechanism. Residue 298–304 coordinates substrate; the sequence is VVTGRKR. Residues arginine 304, 330 to 332, and 412 to 414 each bind GTP; these read KLD and STS.

Belongs to the adenylosuccinate synthetase family. In terms of assembly, homodimer. Requires Mg(2+) as cofactor.

The protein resides in the cytoplasm. It carries out the reaction IMP + L-aspartate + GTP = N(6)-(1,2-dicarboxyethyl)-AMP + GDP + phosphate + 2 H(+). The protein operates within purine metabolism; AMP biosynthesis via de novo pathway; AMP from IMP: step 1/2. Plays an important role in the de novo pathway of purine nucleotide biosynthesis. Catalyzes the first committed step in the biosynthesis of AMP from IMP. The sequence is that of Adenylosuccinate synthetase from Brucella anthropi (strain ATCC 49188 / DSM 6882 / CCUG 24695 / JCM 21032 / LMG 3331 / NBRC 15819 / NCTC 12168 / Alc 37) (Ochrobactrum anthropi).